A 548-amino-acid polypeptide reads, in one-letter code: WEB family protein At1g12150 (548 aa).

A coiled-coil region spans residues K71–N544. Residues V430–E448 show a composition bias toward basic and acidic residues. Residues V430 to I455 are disordered.

The protein belongs to the WEB family.

This chain is WEB family protein At1g12150, found in Arabidopsis thaliana (Mouse-ear cress).